The primary structure comprises 59 residues: Large ribosomal subunit protein uL30 (59 aa).

It belongs to the universal ribosomal protein uL30 family. Part of the 50S ribosomal subunit.

This Brachyspira hyodysenteriae (strain ATCC 49526 / WA1) protein is Large ribosomal subunit protein uL30.